A 538-amino-acid polypeptide reads, in one-letter code: RNA-binding protein RO60 (538 aa).

The TROVE domain maps to 16 to 369 (VPNSEGCYVW…SFKLVEPTGK (354 aa)). The tract at residues 120–284 (RIPTHLFTFI…DMPLTALLRN (165 aa)) is RNA-binding. The tract at residues 361 to 538 (FKLVEPTGKR…VIRNFTLDLI (178 aa)) is VWFA-like domain. A divalent metal cation contacts are provided by S378, S380, and T445.

The protein belongs to the Ro 60 kDa family.

The protein resides in the cytoplasm. Functionally, RNA-binding protein that binds to misfolded non-coding RNAs, pre-5S rRNA, and several small cytoplasmic RNA molecules known as Y RNAs. May play roles in cilia formation and/or maintenance. The polypeptide is RNA-binding protein RO60 (Xenopus laevis (African clawed frog)).